We begin with the raw amino-acid sequence, 308 residues long: Putative gluconeogenesis factor (308 aa).

This sequence belongs to the gluconeogenesis factor family.

The protein resides in the cytoplasm. Its function is as follows. Required for morphogenesis under gluconeogenic growth conditions. The polypeptide is Putative gluconeogenesis factor (Pasteurella multocida (strain Pm70)).